Consider the following 117-residue polypeptide: Large ribosomal subunit protein uL18 (117 aa).

The protein belongs to the universal ribosomal protein uL18 family. As to quaternary structure, part of the 50S ribosomal subunit; part of the 5S rRNA/L5/L18/L25 subcomplex. Contacts the 5S and 23S rRNAs.

Its function is as follows. This is one of the proteins that bind and probably mediate the attachment of the 5S RNA into the large ribosomal subunit, where it forms part of the central protuberance. The sequence is that of Large ribosomal subunit protein uL18 from Mannheimia succiniciproducens (strain KCTC 0769BP / MBEL55E).